A 383-amino-acid polypeptide reads, in one-letter code: WD repeat-containing protein 55 (383 aa).

Positions 1–11 are enriched in basic and acidic residues; it reads MDRTCEERPAE. The segment at 1–33 is disordered; the sequence is MDRTCEERPAEDGSDEEDPDSMEAPTRIRDTPE. Residues 12-21 show a composition bias toward acidic residues; it reads DGSDEEDPDS. A Phosphoserine modification is found at serine 14. WD repeat units lie at residues 36-75, 82-121, 125-163, 166-205, 208-247, 250-289, and 293-332; these read VLEAPASGLAFHPARDLLAAGDVDGDVFVFSYSCQEGETK, HHLKACRAVAFSEDGQKLITVSKDKAIHVLDVEQGQLERR, AHGAPINSLLLVDENVLATGDDTGGICLWDQRKEGPLMD, QHEEYIADMALDPAKKLLLTASGDGCLGIFNIKRRRFELL, PQSGDLTSVTLMKWGKKVACGSSEGTIYLFNWNGFGATSD, ALRAESIDCMVPVTESLLCTGSTDGVIRAVNILPNRVVGS, and HTGEPVEELALSHCGRFLASSGHDQRLKFWDMAQLRAVVV. Serine 354 is subject to Phosphoserine. The interval 363 to 383 is disordered; that stretch reads REEGEDSMAQEEKEETGDDSD. A compositionally biased stretch (acidic residues) spans 365–383; the sequence is EGEDSMAQEEKEETGDDSD. Threonine 378 carries the phosphothreonine modification. At serine 382 the chain carries Phosphoserine.

It belongs to the WD repeat WDR55 family.

The protein localises to the nucleus. It localises to the nucleolus. It is found in the cytoplasm. Its function is as follows. Nucleolar protein that acts as a modulator of rRNA synthesis. Plays a central role during organogenesis. This is WD repeat-containing protein 55 (WDR55) from Homo sapiens (Human).